The chain runs to 125 residues: MGSALMFTDTHEWILDNGDGSVTIGISNQAQQLLGDVVFVDMPEVGDNTQAGETFSLVESVKAASDLYAPVTGEIIEINEELEDSPELINESPYSAGWIVKIKLADRNELNNLMSSEDYLAANAE.

Residues 21–103 (SVTIGISNQA…YSAGWIVKIK (83 aa)) enclose the Lipoyl-binding domain. The residue at position 62 (K62) is an N6-lipoyllysine.

The protein belongs to the GcvH family. In terms of assembly, the glycine cleavage system is composed of four proteins: P, T, L and H. Requires (R)-lipoate as cofactor.

The glycine cleavage system catalyzes the degradation of glycine. The H protein shuttles the methylamine group of glycine from the P protein to the T protein. The chain is Glycine cleavage system H protein from Psychromonas ingrahamii (strain DSM 17664 / CCUG 51855 / 37).